A 254-amino-acid polypeptide reads, in one-letter code: MFTYKLILGLVLVVSASARYLVFEDLEGESYLVPNQAEDEQVLEGEPFYENAVQLASPRVRRQAQGSVTLNSDGSMGLGAKVPIVGNEKNVLSALGSVDLNDQLKPASRGMGLALDNVNGHGLSVMKETVPGFGDRLTGAGRVNVFHNDNHDISAKAFVTKNMPDFPNVPNFNTVGGGVDYMYKNKVGASLGMANTPFLDRKDYSAMGNLNVFRSPTTSVDFNAGFKKFDTPVFKSNWEPNFGLTFSRSFGNKW.

An N-terminal signal peptide occupies residues Met-1–Ala-18. The propeptide occupies Arg-19–Arg-62.

This sequence belongs to the attacin/sarcotoxin-2 family.

Its subcellular location is the secreted. Functionally, hemolymph antibacterial protein. This is Attacin-A from Trichoplusia ni (Cabbage looper).